A 102-amino-acid chain; its full sequence is Large ribosomal subunit protein uL24 (102 aa).

Belongs to the universal ribosomal protein uL24 family. As to quaternary structure, part of the 50S ribosomal subunit.

Its function is as follows. One of two assembly initiator proteins, it binds directly to the 5'-end of the 23S rRNA, where it nucleates assembly of the 50S subunit. Functionally, one of the proteins that surrounds the polypeptide exit tunnel on the outside of the subunit. This chain is Large ribosomal subunit protein uL24, found in Macrococcus caseolyticus (strain JCSC5402) (Macrococcoides caseolyticum).